Here is a 153-residue protein sequence, read N- to C-terminus: uncharacterized protein (153 aa).

Positions 17-78 are disordered; sequence IYIHTPHPHP…HTTLSNLSLN (62 aa). Positions 22-38 are enriched in basic residues; the sequence is PHPHPHPHPHTPTHTHP.

This is an uncharacterized protein from Saccharomyces cerevisiae (strain ATCC 204508 / S288c) (Baker's yeast).